We begin with the raw amino-acid sequence, 522 residues long: Maturase K (522 aa).

The protein belongs to the intron maturase 2 family. MatK subfamily.

The protein resides in the plastid. Its subcellular location is the chloroplast. Usually encoded in the trnK tRNA gene intron. Probably assists in splicing its own and other chloroplast group II introns. This Schizorhiza neglecta (Lapeirousia neglecta) protein is Maturase K.